We begin with the raw amino-acid sequence, 413 residues long: Multifunctional CCA protein (413 aa).

Residues glycine 8 and arginine 11 each coordinate ATP. Glycine 8 and arginine 11 together coordinate CTP. The Mg(2+) site is built by aspartate 21 and aspartate 23. Positions 91, 137, and 140 each coordinate ATP. CTP-binding residues include arginine 91, arginine 137, and arginine 140. The 102-residue stretch at 228–329 (TGIHTLMVLA…LKVFDKADAW (102 aa)) folds into the HD domain.

It belongs to the tRNA nucleotidyltransferase/poly(A) polymerase family. Bacterial CCA-adding enzyme type 1 subfamily. As to quaternary structure, monomer. Can also form homodimers and oligomers. Mg(2+) is required as a cofactor. Requires Ni(2+) as cofactor.

It carries out the reaction a tRNA precursor + 2 CTP + ATP = a tRNA with a 3' CCA end + 3 diphosphate. The enzyme catalyses a tRNA with a 3' CCA end + 2 CTP + ATP = a tRNA with a 3' CCACCA end + 3 diphosphate. Catalyzes the addition and repair of the essential 3'-terminal CCA sequence in tRNAs without using a nucleic acid template. Adds these three nucleotides in the order of C, C, and A to the tRNA nucleotide-73, using CTP and ATP as substrates and producing inorganic pyrophosphate. tRNA 3'-terminal CCA addition is required both for tRNA processing and repair. Also involved in tRNA surveillance by mediating tandem CCA addition to generate a CCACCA at the 3' terminus of unstable tRNAs. While stable tRNAs receive only 3'-terminal CCA, unstable tRNAs are marked with CCACCA and rapidly degraded. The chain is Multifunctional CCA protein from Aeromonas salmonicida (strain A449).